Here is a 1871-residue protein sequence, read N- to C-terminus: Plexin-A3 (1871 aa).

The N-terminal stretch at 1-19 (MPSVCLLLLLFLAVGGALG) is a signal peptide. Residues 20–488 (NRPFRAFVVT…SEKQVSQLPV (469 aa)) enclose the Sema domain. Residues 20 to 1220 (NRPFRAFVVT…SAERALTLPA (1201 aa)) lie on the Extracellular side of the membrane. A glycan (N-linked (GlcNAc...) asparagine) is linked at Asn-59. Disulfide bonds link Cys-77-Cys-86, Cys-112-Cys-120, Cys-266-Cys-387, Cys-282-Cys-338, Cys-356-Cys-375, Cys-491-Cys-508, Cys-497-Cys-539, Cys-500-Cys-517, and Cys-511-Cys-523. N-linked (GlcNAc...) asparagine glycosylation is present at Asn-548. A disulfide bond links Cys-574 and Cys-594. N-linked (GlcNAc...) asparagine glycans are attached at residues Asn-637, Asn-738, and Asn-746. 4 IPT/TIG domains span residues 840–933 (PRIT…YSFV), 935–1020 (PTFD…YTYT), 1023–1122 (PTVT…FTYY), and 1125–1211 (PSFE…LHIS). Residues Asn-1009, Asn-1036, Asn-1073, Asn-1115, and Asn-1162 are each glycosylated (N-linked (GlcNAc...) asparagine). A helical transmembrane segment spans residues 1221–1241 (MMGLAAGGGLLLLAITAVLVA). Residues 1242–1871 (YKRKTQDADR…QIISLVSSDS (630 aa)) are Cytoplasmic-facing. At Ser-1596 the chain carries Phosphoserine.

This sequence belongs to the plexin family. In terms of assembly, interacts with CBFA2T3/MTG16.

The protein localises to the cell membrane. In terms of biological role, coreceptor for SEMA3A and SEMA3F. Necessary for signaling by class 3 semaphorins and subsequent remodeling of the cytoskeleton. Plays a role in axon guidance in the developing nervous system. Regulates the migration of sympathetic neurons, but not of neural crest precursors. Required for normal dendrite spine morphology in pyramidal neurons. May play a role in regulating semaphorin-mediated programmed cell death in the developing nervous system. Class 3 semaphorins bind to a complex composed of a neuropilin and a plexin. The plexin modulates the affinity of the complex for specific semaphorins, and its cytoplasmic domain is required for the activation of down-stream signaling events in the cytoplasm. In Homo sapiens (Human), this protein is Plexin-A3 (PLXNA3).